The chain runs to 513 residues: ATP synthase subunit alpha 1 (513 aa).

Position 169–176 (169–176) interacts with ATP; that stretch reads GDRQTGKT.

The protein belongs to the ATPase alpha/beta chains family. F-type ATPases have 2 components, CF(1) - the catalytic core - and CF(0) - the membrane proton channel. CF(1) has five subunits: alpha(3), beta(3), gamma(1), delta(1), epsilon(1). CF(0) has three main subunits: a(1), b(2) and c(9-12). The alpha and beta chains form an alternating ring which encloses part of the gamma chain. CF(1) is attached to CF(0) by a central stalk formed by the gamma and epsilon chains, while a peripheral stalk is formed by the delta and b chains.

It is found in the cell inner membrane. It carries out the reaction ATP + H2O + 4 H(+)(in) = ADP + phosphate + 5 H(+)(out). Functionally, produces ATP from ADP in the presence of a proton gradient across the membrane. The alpha chain is a regulatory subunit. The chain is ATP synthase subunit alpha 1 from Nitrosomonas eutropha (strain DSM 101675 / C91 / Nm57).